Consider the following 95-residue polypeptide: Trypomastigote decay-accelerating factor (95 aa).

Belongs to the receptors of complement activation (RCA) family.

Functionally, interferes with the efficient assembly of the host C3 convertase. Could protect parasites from complement-mediated lysis by sera from a number of different species. The polypeptide is Trypomastigote decay-accelerating factor (Trypanosoma cruzi).